Here is a 547-residue protein sequence, read N- to C-terminus: Inactive delta-guaiene synthase (547 aa).

3 residues coordinate Mg(2+): Asp-299, Asp-303, and Asp-444. The DDXXD motif motif lies at Asp-299 to Asp-303.

Belongs to the terpene synthase family. Mg(2+) is required as a cofactor.

The sequence is that of Inactive delta-guaiene synthase (C1) from Aquilaria crassna (Eagle wood).